Reading from the N-terminus, the 704-residue chain is Vacuolar fusion protein CCZ1 (704 aa).

Positions Leu281–Leu322 are disordered.

It belongs to the CCZ1 family. As to quaternary structure, forms a complex with MON1. Interacts with YPT7. Interacts with YPT10 with a strong preference for the GTP-associated form; may interact with other small GTPase Rab5 homologs but at much lower levels.

It is found in the endosome. Its subcellular location is the multivesicular body membrane. The protein resides in the prevacuolar compartment membrane. It localises to the vacuole membrane. The protein localises to the vesicle. The YPT7 guanine nucleotide-exchange factor (GEF) activity of the MON1-CCZ1 complex is autoinhibited by the N-terminal disordered region of MON1. Functionally, in complex with MON1, is required for multiple vacuole delivery pathways including the cytoplasm to vacuole transport (Cvt), autophagy, pexophagy and endocytosis. The MON1-CCZ1 complex acts at the fusion of vesicles with the vacuole, through its regulation of the SNARE complex during the coordinated priming and docking stages of fusion, and particularly at the stage of tethering/docking. The MON1-CCZ1 complex is recruited to membranes enriched in charged lipids, particularly phosphatidylinositol 3-phosphate (PtdIns3P), by GTP-associated small GTPase RAB5 homologs (YPT10, YPT52, YPT53 and VPS21). The MON1-CCZ1 complex recruits GDP-associated small GTPase YPT7 to membranes and acts as a guanine nucleotide-exchange factor (GEF), promoting nucleotide exchange on YPT7 and triggering endosomal maturation by recruiting downstream effectors such as components of the HOPS tethering complex. This is Vacuolar fusion protein CCZ1 (CCZ1) from Saccharomyces cerevisiae (strain ATCC 204508 / S288c) (Baker's yeast).